Reading from the N-terminus, the 559-residue chain is MLSDIEIAGAATLRPITEVATESLGIGAEHLVPYGHYKAKVGITYLNSLADRPLGRLILVTALSPTPPGEGKTTTSVGLTDALHGLGKRAIACLREPSMGPVFGLKGGAAGGGYSQVVPMTDINLHFTGDFAAIAAANNLLAALIDNHVHHGNELDIDVRSVTWKRVLDTNDRALREVVVGLGGPPNGFPRQDGFDIVVASELMAIFCLTESWADLKRRIGDIVIGYSRAGAPVTARDLGADGAMAVLLRDAIAPNLVQTLEGAPALVHGGPFANIAHGCSSVMATRAGLRLADYVVTEAGFGADLGAEKFIDIKCRMSGMRPDVAVVVATVRALKYHGGVALADLDREDLGAVEAGMDNLRRHLDNLRHLNGVPCVVAVNRFPTDTDLEVVRVVELAASYGVPAYQATHFTDGGIGAQDLAKGVLQALEEPARDEFSFTYPDELSLTEKVEAVATRVYGAGQVTWDGKARKRLARIERDGYGTLPVCVAKTQYSFSTDPGLLGAPTGHELRVREVRLSAGAGFVVVICGDMMTMPGLPTRPAATRIDLADDGTIIGLS.

ATP is bound at residue 66–73 (TPPGEGKT).

This sequence belongs to the formate--tetrahydrofolate ligase family.

It catalyses the reaction (6S)-5,6,7,8-tetrahydrofolate + formate + ATP = (6R)-10-formyltetrahydrofolate + ADP + phosphate. It participates in one-carbon metabolism; tetrahydrofolate interconversion. The protein is Formate--tetrahydrofolate ligase of Nocardioides sp. (strain ATCC BAA-499 / JS614).